A 466-amino-acid chain; its full sequence is Asparagine--tRNA ligase (466 aa).

This sequence belongs to the class-II aminoacyl-tRNA synthetase family. In terms of assembly, homodimer.

Its subcellular location is the cytoplasm. The catalysed reaction is tRNA(Asn) + L-asparagine + ATP = L-asparaginyl-tRNA(Asn) + AMP + diphosphate + H(+). The protein is Asparagine--tRNA ligase of Shewanella frigidimarina (strain NCIMB 400).